The chain runs to 636 residues: Sodium-dependent multivitamin transporter (636 aa).

A run of 12 helical transmembrane segments spans residues 24 to 44 (FSLV…AIGL), 68 to 88 (CLPV…ILGV), 101 to 121 (FLGC…IPVF), 143 to 163 (ICGT…VLYA), 176 to 196 (LWLS…LGGL), 199 to 219 (VIWT…AVII), 256 to 276 (FWTL…VNQA), 297 to 317 (VFPC…VMFA), 336 to 356 (FVLY…GLFV), 404 to 424 (FGYG…GPVL), 428 to 448 (ISIF…GMFF), and 456 to 476 (AIVG…GSIV). N-linked (GlcNAc...) asparagine glycans are attached at residues N489 and N498. A helical membrane pass occupies residues 528-548 (LWYSAHNSTTVIVVGLIVSLL). Positions 606 to 627 (LRASGDKEPMTEASPVHQGTSP) are disordered.

The protein belongs to the sodium:solute symporter (SSF) (TC 2.A.21) family. In terms of assembly, interacts with PDZD11.

Its subcellular location is the cell membrane. It localises to the apical cell membrane. The enzyme catalyses biotin(out) + 2 Na(+)(out) = biotin(in) + 2 Na(+)(in). It catalyses the reaction (R)-pantothenate(out) + 2 Na(+)(out) = (R)-pantothenate(in) + 2 Na(+)(in). The catalysed reaction is (R)-lipoate(out) + 2 Na(+)(out) = (R)-lipoate(in) + 2 Na(+)(in). It carries out the reaction iodide(out) + 2 Na(+)(out) = iodide(in) + 2 Na(+)(in). Functionally, sodium-dependent multivitamin transporter that mediates the electrogenic transport of pantothenate, biotin, lipoate and iodide. Functions as a Na(+)-coupled substrate symporter where the stoichiometry of Na(+):substrate is 2:1, creating an electrochemical Na(+) gradient used as driving force for substrate uptake. Required for biotin and pantothenate uptake in the intestine across the brush border membrane. Plays a role in the maintenance of intestinal mucosa integrity, by providing the gut mucosa with biotin. Contributes to the luminal uptake of biotin and pantothenate into the brain across the blood-brain barrier. This Oryctolagus cuniculus (Rabbit) protein is Sodium-dependent multivitamin transporter (SLC5A6).